Reading from the N-terminus, the 177-residue chain is ATP synthase subunit delta (177 aa).

The protein belongs to the ATPase delta chain family. In terms of assembly, F-type ATPases have 2 components, F(1) - the catalytic core - and F(0) - the membrane proton channel. F(1) has five subunits: alpha(3), beta(3), gamma(1), delta(1), epsilon(1). F(0) has three main subunits: a(1), b(2) and c(10-14). The alpha and beta chains form an alternating ring which encloses part of the gamma chain. F(1) is attached to F(0) by a central stalk formed by the gamma and epsilon chains, while a peripheral stalk is formed by the delta and b chains.

Its subcellular location is the cell inner membrane. F(1)F(0) ATP synthase produces ATP from ADP in the presence of a proton or sodium gradient. F-type ATPases consist of two structural domains, F(1) containing the extramembraneous catalytic core and F(0) containing the membrane proton channel, linked together by a central stalk and a peripheral stalk. During catalysis, ATP synthesis in the catalytic domain of F(1) is coupled via a rotary mechanism of the central stalk subunits to proton translocation. Functionally, this protein is part of the stalk that links CF(0) to CF(1). It either transmits conformational changes from CF(0) to CF(1) or is implicated in proton conduction. This is ATP synthase subunit delta from Vibrio vulnificus (strain CMCP6).